Here is a 341-residue protein sequence, read N- to C-terminus: GTP-binding protein GTR2 (341 aa).

Positions 23, 24, 43, 124, and 127 each coordinate GTP.

The protein belongs to the GTR/RAG GTP-binding protein family. In terms of assembly, heterodimer; with GTR1. Component of the GSE complex composed of GTR1, GTR2, SLM4, MEH1 and LTV1. Component of the EGO complex, at least composed of GTR2, SLM4 and MEH1. Interacts with GTR1; the interaction is direct.

It is found in the vacuole membrane. The catalysed reaction is GTP + H2O = GDP + phosphate + H(+). Its function is as follows. GTPase involved in activation of the TORC1 signaling pathway, which promotes growth and represses autophagy in nutrient-rich conditions. Also required for TORC1 inactivation during nitrogen starvation. Required for intracellular sorting of GAP1 out of the endosome. Involved in the regulation of microautophagy. This is GTP-binding protein GTR2 from Saccharomyces cerevisiae (strain ATCC 204508 / S288c) (Baker's yeast).